A 259-amino-acid polypeptide reads, in one-letter code: O-antigen export system permease protein RfbA (259 aa).

6 helical membrane-spanning segments follow: residues 33-53 (FGYL…YFIF), 73-95 (FPWQ…NAQI), 111-131 (VMME…FLFV), 142-162 (WGIP…SIIF), 176-196 (VSLG…SDMI), and 228-248 (EYIS…LAIF). In terms of domain architecture, ABC transmembrane type-2 spans 33 to 251 (FGYLWSIANP…IVGLAIFNKL (219 aa)).

It belongs to the ABC-2 integral membrane protein family.

The protein localises to the cell inner membrane. Functionally, may form an ATP-driven O-antigen export apparatus, in association with RfbB. This is O-antigen export system permease protein RfbA (rfbA) from Klebsiella pneumoniae.